We begin with the raw amino-acid sequence, 311 residues long: tRNA-cytidine(32) 2-sulfurtransferase (311 aa).

The PP-loop motif motif lies at 47–52 (SGGKDS). Cys-122, Cys-125, and Cys-213 together coordinate [4Fe-4S] cluster.

Belongs to the TtcA family. As to quaternary structure, homodimer. Requires Mg(2+) as cofactor. It depends on [4Fe-4S] cluster as a cofactor.

The protein localises to the cytoplasm. It carries out the reaction cytidine(32) in tRNA + S-sulfanyl-L-cysteinyl-[cysteine desulfurase] + AH2 + ATP = 2-thiocytidine(32) in tRNA + L-cysteinyl-[cysteine desulfurase] + A + AMP + diphosphate + H(+). It functions in the pathway tRNA modification. Its function is as follows. Catalyzes the ATP-dependent 2-thiolation of cytidine in position 32 of tRNA, to form 2-thiocytidine (s(2)C32). The sulfur atoms are provided by the cysteine/cysteine desulfurase (IscS) system. The protein is tRNA-cytidine(32) 2-sulfurtransferase of Salmonella heidelberg (strain SL476).